The following is a 1612-amino-acid chain: DNA topoisomerase 2-beta (1612 aa).

Position 2 is an N-acetylalanine (alanine 2). Lysine 3 bears the N6-acetyllysine mark. Glycyl lysine isopeptide (Lys-Gly) (interchain with G-Cter in SUMO2) cross-links involve residues lysine 21 and lysine 22. Residues asparagine 100, asparagine 129, and serine 157–asparagine 159 contribute to the ATP site. Residues lysine 165 and lysine 166 each participate in a glycyl lysine isopeptide (Lys-Gly) (interchain with G-Cter in SUMO2) cross-link. Residue glycine 170–lysine 177 participates in ATP binding. Residues lysine 216 and lysine 287 each participate in a glycyl lysine isopeptide (Lys-Gly) (interchain with G-Cter in SUMO2) cross-link. The segment at lysine 351–lysine 353 is interaction with DNA. Residues lysine 355 and lysine 361 each participate in a glycyl lysine isopeptide (Lys-Gly) (interchain with G-Cter in SUMO2) cross-link. Glutamine 385 to lysine 387 provides a ligand contact to ATP. Residues lysine 425, lysine 427, and lysine 434 each participate in a glycyl lysine isopeptide (Lys-Gly) (interchain with G-Cter in SUMO2) cross-link. The region spanning cysteine 464–glutamate 581 is the Toprim domain. 3 residues coordinate Mg(2+): glutamate 470, aspartate 550, and aspartate 552. Glycyl lysine isopeptide (Lys-Gly) (interchain with G-Cter in SUMO2) cross-links involve residues lysine 588, lysine 593, lysine 623, lysine 631, lysine 634, lysine 664, and lysine 700. Residues isoleucine 724–leucine 1177 form the Topo IIA-type catalytic domain. Tyrosine 814 (O-(5'-phospho-DNA)-tyrosine intermediate) is an active-site residue. The interaction with DNA stretch occupies residues lysine 999–serine 1008. Lysine 1080 participates in a covalent cross-link: Glycyl lysine isopeptide (Lys-Gly) (interchain with G-Cter in SUMO2). A disordered region spans residues alanine 1098–glycine 1128. Glycyl lysine isopeptide (Lys-Gly) (interchain with G-Cter in SUMO2) cross-links involve residues lysine 1202, lysine 1205, lysine 1214, and lysine 1215. Residue serine 1224 is modified to Phosphoserine. Residues lysine 1238, lysine 1250, and lysine 1259 each participate in a glycyl lysine isopeptide (Lys-Gly) (interchain with G-Cter in SUMO2) cross-link. Residues leucine 1245 to arginine 1586 are disordered. Residue threonine 1280 is modified to Phosphothreonine. Glycyl lysine isopeptide (Lys-Gly) (interchain with G-Cter in SUMO2) cross-links involve residues lysine 1311 and lysine 1315. 2 stretches are compositionally biased toward basic and acidic residues: residues proline 1322–serine 1332 and serine 1346–tyrosine 1358. Serine 1324, serine 1328, serine 1330, serine 1332, and serine 1346 each carry phosphoserine. Residue tyrosine 1358 is modified to Phosphotyrosine. A compositionally biased stretch (acidic residues) spans phenylalanine 1362–leucine 1379. Serine 1363 carries the post-translational modification Phosphoserine. Lysine 1385 is covalently cross-linked (Glycyl lysine isopeptide (Lys-Gly) (interchain with G-Cter in SUMO2)). Serine 1387 is subject to Phosphoserine. The residue at position 1390 (threonine 1390) is a Phosphothreonine. A Phosphoserine modification is found at serine 1400. Tyrosine 1408 is subject to Phosphotyrosine. Serine 1411 bears the Phosphoserine mark. A compositionally biased stretch (basic and acidic residues) spans alanine 1417–glutamine 1429. Lysine 1427 participates in a covalent cross-link: Glycyl lysine isopeptide (Lys-Gly) (interchain with G-Cter in SUMO2). Serine 1428, serine 1439, and serine 1441 each carry phosphoserine. Lysine 1443 participates in a covalent cross-link: Glycyl lysine isopeptide (Lys-Gly) (interchain with G-Cter in SUMO2). The segment covering lysine 1443 to serine 1453 has biased composition (basic and acidic residues). Residues serine 1448, serine 1453, and serine 1460 each carry the phosphoserine modification. Lysine 1477 is covalently cross-linked (Glycyl lysine isopeptide (Lys-Gly) (interchain with G-Cter in SUMO2)). The segment at lysine 1493 to lysine 1499 is interaction with PLSCR1. Phosphoserine is present on residues serine 1509, serine 1511, and serine 1513. Basic residues predominate over residues glycine 1526–alanine 1536. Phosphoserine is present on residues serine 1537 and serine 1539. The segment covering lysine 1550–lysine 1561 has biased composition (basic residues). At threonine 1562 the chain carries Phosphothreonine. 2 positions are modified to phosphoserine: serine 1563 and serine 1568. Tyrosine 1596 carries the phosphotyrosine modification. Serine 1600 carries the phosphoserine modification.

The protein belongs to the type II topoisomerase family. Homodimer. Interacts with PLSCR1 and KIAA1210. Mg(2+) is required as a cofactor. Requires Mn(2+) as cofactor. It depends on Ca(2+) as a cofactor.

The protein resides in the nucleus. Its subcellular location is the nucleolus. It localises to the nucleoplasm. It carries out the reaction ATP-dependent breakage, passage and rejoining of double-stranded DNA.. Functionally, key decatenating enzyme that alters DNA topology by binding to two double-stranded DNA molecules, generating a double-stranded break in one of the strands, passing the intact strand through the broken strand, and religating the broken strand. This is DNA topoisomerase 2-beta (TOP2B) from Cricetulus longicaudatus (Long-tailed dwarf hamster).